The primary structure comprises 100 residues: Small ribosomal subunit protein uS14c (100 aa).

The protein belongs to the universal ribosomal protein uS14 family. As to quaternary structure, part of the 30S ribosomal subunit.

The protein resides in the plastid. The protein localises to the chloroplast. Binds 16S rRNA, required for the assembly of 30S particles. The polypeptide is Small ribosomal subunit protein uS14c (Angiopteris evecta (Mule's foot fern)).